Consider the following 340-residue polypeptide: Homeobox protein DBX2 (340 aa).

Positions 185 to 244 (GILRRAVFSEDQRKALEKMFQKQKYISKTDRKKLAINLGLKESQVKIWFQNRRMKWRNSK) form a DNA-binding region, homeobox. The segment at 283–313 (QQHPSPGWRENSPEPSERLIQGSPGAEALPP) is disordered.

Belongs to the H2.0 homeobox family.

The protein resides in the nucleus. This is Homeobox protein DBX2 (DBX2) from Bos taurus (Bovine).